The sequence spans 155 residues: Snaclec bothrojaracin subunit alpha (155 aa).

The signal sequence occupies residues 1–23 (MGRFLFVSFGLLVVFLSLSGTAA). 3 disulfides stabilise this stretch: cysteine 25–cysteine 36, cysteine 53–cysteine 150, and cysteine 125–cysteine 142. A C-type lectin domain is found at 32-151 (HEGHCYKFFQ…CGQQNPFVCK (120 aa)).

Belongs to the snaclec family. Heterodimer of subunits alpha and beta; disulfide-linked. In terms of tissue distribution, expressed by the venom gland.

The protein localises to the secreted. Its function is as follows. This potent antithrombotic agent acts in a calcium-independent manner. Exerts its anticoagulant effect by two distinct mechanisms. It binds to activated thrombin through exosite 1, blocking fibrinogen clotting, platelet activation, factor V activation and other effects, and it interacts with prothrombin (F2), decreasing its proteolytic activation -especially in the presence of factor Va. In vivo, intravenous injection before thrombosis induction causes a significant decrease in thrombus weight. Furthermore, BJC shows a prolonged effect by remaining in the plasma bound to prothrombin for at least 12 hours. The chain is Snaclec bothrojaracin subunit alpha from Bothrops jararaca (Jararaca).